The chain runs to 112 residues: Large ribosomal subunit protein uL24 (112 aa).

The protein belongs to the universal ribosomal protein uL24 family. Part of the 50S ribosomal subunit.

One of two assembly initiator proteins, it binds directly to the 5'-end of the 23S rRNA, where it nucleates assembly of the 50S subunit. Functionally, one of the proteins that surrounds the polypeptide exit tunnel on the outside of the subunit. This chain is Large ribosomal subunit protein uL24, found in Desulfitobacterium hafniense (strain Y51).